The sequence spans 127 residues: Small ribosomal subunit protein uS13 (127 aa).

Positions 93–127 (RRGMPVRGQRTRTNARTRRGRRGQAIGIKKKATKK) are disordered.

Belongs to the universal ribosomal protein uS13 family. Part of the 30S ribosomal subunit. Forms a loose heterodimer with protein S19. Forms two bridges to the 50S subunit in the 70S ribosome.

Located at the top of the head of the 30S subunit, it contacts several helices of the 16S rRNA. In the 70S ribosome it contacts the 23S rRNA (bridge B1a) and protein L5 of the 50S subunit (bridge B1b), connecting the 2 subunits; these bridges are implicated in subunit movement. Contacts the tRNAs in the A and P-sites. The chain is Small ribosomal subunit protein uS13 from Chloroflexus aurantiacus (strain ATCC 29366 / DSM 635 / J-10-fl).